A 441-amino-acid polypeptide reads, in one-letter code: Ribosomal protein uS12 methylthiotransferase RimO (441 aa).

The MTTase N-terminal domain maps to 7–117 (PKISFVSLGC…VLEAVHRASP (111 aa)). [4Fe-4S] cluster contacts are provided by Cys-16, Cys-52, Cys-81, Cys-148, Cys-152, and Cys-155. Residues 134-371 (LTPRHYAYLK…MARQQKISAR (238 aa)) form the Radical SAM core domain. Residues 374-440 (KRKVGTRQQI…EYDLHGTVAG (67 aa)) form the TRAM domain.

The protein belongs to the methylthiotransferase family. RimO subfamily. The cofactor is [4Fe-4S] cluster.

It is found in the cytoplasm. It catalyses the reaction L-aspartate(89)-[ribosomal protein uS12]-hydrogen + (sulfur carrier)-SH + AH2 + 2 S-adenosyl-L-methionine = 3-methylsulfanyl-L-aspartate(89)-[ribosomal protein uS12]-hydrogen + (sulfur carrier)-H + 5'-deoxyadenosine + L-methionine + A + S-adenosyl-L-homocysteine + 2 H(+). Its function is as follows. Catalyzes the methylthiolation of an aspartic acid residue of ribosomal protein uS12. This chain is Ribosomal protein uS12 methylthiotransferase RimO, found in Bradyrhizobium sp. (strain BTAi1 / ATCC BAA-1182).